The following is a 308-amino-acid chain: Elongation factor Ts (308 aa).

Positions threonine 80–valine 83 are involved in Mg(2+) ion dislocation from EF-Tu.

Belongs to the EF-Ts family.

Its subcellular location is the cytoplasm. Associates with the EF-Tu.GDP complex and induces the exchange of GDP to GTP. It remains bound to the aminoacyl-tRNA.EF-Tu.GTP complex up to the GTP hydrolysis stage on the ribosome. The polypeptide is Elongation factor Ts (Rhizobium etli (strain CIAT 652)).